The primary structure comprises 159 residues: Small ribosomal subunit protein bS6 (159 aa).

Residues Sec46 and Sec52 are each a non-standard amino acid (selenocysteine).

Belongs to the bacterial ribosomal protein bS6 family.

In terms of biological role, binds together with bS18 to 16S ribosomal RNA. The chain is Small ribosomal subunit protein bS6 from Desulfotalea psychrophila (strain LSv54 / DSM 12343).